The chain runs to 357 residues: MLRRGFLSRINAAQWSRQMSVVAKSLKYTQHGEPQEVLQLVEDKLPDPKDNQVLVKILAAPINPADINTIQGKYPVKPKFPAVGGNECVAEVICVGDKVKGFEAGQHVIPLASGLGTWTTHAVYKEDQLLIVSKKVGLAEAATSTVNPTTAYRMLKDFVQLCPGDTVIQNGANSAVGQAVHQLCRAWGINSVGIVRDRPEIAELKQMLQCLGATEVLTEAEIRTSDIFKSGKLKKPRLAFNCVGGKSATEVSRHLDNGGVLVTYGGMSREPVTVATGPLIFKDIAFRGFWMTRWSKENYSSPERSKMFKEIFELMEQGKFVAPNHEMVPLAKFKDAAAAALSFKGFTGKKYILDMSI.

Residues 1–19 (MLRRGFLSRINAAQWSRQM) constitute a mitochondrion transit peptide. The 317-residue stretch at 36-352 (EVLQLVEDKL…FKGFTGKKYI (317 aa)) folds into the Enoyl reductase (ER) domain. The active-site Proton donor is the tyrosine 74. Residues asparagine 147, 173-176 (NSAV), 196-198 (RDR), 264-267 (YGGM), 289-291 (FWM), lysine 349, and lysine 350 each bind NADP(+).

The protein belongs to the zinc-containing alcohol dehydrogenase family. Quinone oxidoreductase subfamily. As to quaternary structure, homodimer. As to expression, expressed in the central nervous system.

It is found in the mitochondrion. The enzyme catalyses a 2,3-saturated acyl-[ACP] + NADP(+) = a (2E)-enoyl-[ACP] + NADPH + H(+). Functionally, catalyzes the NADPH-dependent reduction of trans-2-enoyl thioesters in mitochondrial fatty acid synthesis (fatty acid synthesis type II). Fatty acid chain elongation in mitochondria uses acyl carrier protein (ACP) as an acyl group carrier, but the enzyme accepts both ACP and CoA thioesters as substrates in vitro. Involved in iron homeostasis; affecting Fe-S cluster assembly and ceramide metabolism. Required for proper morphology and bioenergetic functions of mitochondria. Required for maintenance of neurons, including photoreceptor neurons. In Drosophila melanogaster (Fruit fly), this protein is Enoyl-[acyl-carrier-protein] reductase, mitochondrial.